The chain runs to 33 residues: Brevinin-2Eb (33 aa).

Residues C27 and C33 are joined by a disulfide bond.

The protein belongs to the frog skin active peptide (FSAP) family. Brevinin subfamily. In terms of tissue distribution, expressed by the skin glands.

The protein localises to the secreted. Its function is as follows. Shows antibacterial activity against representative Gram-negative and Gram-positive bacterial species, and hemolytic activity. In Pelophylax lessonae (Pool frog), this protein is Brevinin-2Eb.